The following is a 398-amino-acid chain: Acetate kinase (398 aa).

Residue N7 participates in Mg(2+) binding. K14 is an ATP binding site. A substrate-binding site is contributed by R91. The Proton donor/acceptor role is filled by D148. Residues 208–212 (HIGNG), 283–285 (DMR), and 331–335 (GVGEN) each bind ATP. E384 contributes to the Mg(2+) binding site.

Belongs to the acetokinase family. Homodimer. The cofactor is Mg(2+). It depends on Mn(2+) as a cofactor.

Its subcellular location is the cytoplasm. The catalysed reaction is acetate + ATP = acetyl phosphate + ADP. It participates in metabolic intermediate biosynthesis; acetyl-CoA biosynthesis; acetyl-CoA from acetate: step 1/2. In terms of biological role, catalyzes the formation of acetyl phosphate from acetate and ATP. Can also catalyze the reverse reaction. The polypeptide is Acetate kinase (Bacteroides fragilis (strain ATCC 25285 / DSM 2151 / CCUG 4856 / JCM 11019 / LMG 10263 / NCTC 9343 / Onslow / VPI 2553 / EN-2)).